Here is a 71-residue protein sequence, read N- to C-terminus: Long neurotoxin 1 (71 aa).

5 disulfides stabilise this stretch: Cys-3–Cys-20, Cys-14–Cys-41, Cys-26–Cys-30, Cys-45–Cys-56, and Cys-57–Cys-62.

The protein belongs to the three-finger toxin family. Long-chain subfamily. Type II alpha-neurotoxin sub-subfamily. In terms of tissue distribution, expressed by the venom gland.

The protein resides in the secreted. Functionally, binds with high affinity to muscular (alpha-1/CHRNA1) and neuronal (alpha-7/CHRNA7) nicotinic acetylcholine receptor (nAChR) and inhibits acetylcholine from binding to the receptor, thereby impairing neuromuscular and neuronal transmission. This chain is Long neurotoxin 1, found in Naja naja (Indian cobra).